We begin with the raw amino-acid sequence, 464 residues long: Soluble pyridine nucleotide transhydrogenase (464 aa).

Residue 35–44 (DSRRQVGGNC) participates in FAD binding.

Belongs to the class-I pyridine nucleotide-disulfide oxidoreductase family. Requires FAD as cofactor.

The protein resides in the cytoplasm. It catalyses the reaction NAD(+) + NADPH = NADH + NADP(+). Its function is as follows. Conversion of NADPH, generated by peripheral catabolic pathways, to NADH, which can enter the respiratory chain for energy generation. The sequence is that of Soluble pyridine nucleotide transhydrogenase from Pseudomonas fluorescens (strain Pf0-1).